Here is a 313-residue protein sequence, read N- to C-terminus: Tyrosine recombinase slr0733 (313 aa).

One can recognise a Core-binding (CB) domain in the interval 7–101 (NNLSGLNQNI…AIKSLVNYAR (95 aa)). The region spanning 122–307 (RDTTGVSPTS…RHQHQAQITD (186 aa)) is the Tyr recombinase domain. Active-site residues include R162, K188, H258, R261, and H285. Y294 (O-(3'-phospho-DNA)-tyrosine intermediate) is an active-site residue.

Belongs to the 'phage' integrase family.

Its subcellular location is the cytoplasm. Site-specific tyrosine recombinase, which acts by catalyzing the cutting and rejoining of the recombining DNA molecules. This is Tyrosine recombinase slr0733 from Synechocystis sp. (strain ATCC 27184 / PCC 6803 / Kazusa).